Here is a 635-residue protein sequence, read N- to C-terminus: Threonine--tRNA ligase (635 aa).

Positions 1–61 (MINISFPDGS…DNDCKFRILT (61 aa)) constitute a TGS domain. The catalytic stretch occupies residues 242–533 (DHRKLGRELD…LIEEYAGRFP (292 aa)). Positions 333, 384, and 510 each coordinate Zn(2+).

Belongs to the class-II aminoacyl-tRNA synthetase family. In terms of assembly, homodimer. Zn(2+) is required as a cofactor.

It is found in the cytoplasm. It carries out the reaction tRNA(Thr) + L-threonine + ATP = L-threonyl-tRNA(Thr) + AMP + diphosphate + H(+). Its function is as follows. Catalyzes the attachment of threonine to tRNA(Thr) in a two-step reaction: L-threonine is first activated by ATP to form Thr-AMP and then transferred to the acceptor end of tRNA(Thr). Also edits incorrectly charged L-seryl-tRNA(Thr). The chain is Threonine--tRNA ligase from Rickettsia rickettsii (strain Sheila Smith).